A 322-amino-acid chain; its full sequence is 2-methylene-furan-3-one reductase (322 aa).

NADP(+) is bound by residues lysine 59, 174-175 (GV), 197-200 (STKK), tyrosine 215, isoleucine 253, 264-266 (FVL), 311-312 (RA), and 311-322 (RATGKVVVYPIP). Position 59 (lysine 59) interacts with substrate.

Belongs to the zinc-containing alcohol dehydrogenase family. Quinone oxidoreductase subfamily. As to quaternary structure, monomer. In terms of processing, the N-terminus is blocked.

It catalyses the reaction 4-hydroxy-2,5-dimethyl-furan-3(2H)-one + NADP(+) = 4-hydroxy-5-methyl-2-methylenefuran-3(2H)-one + NADPH + H(+). In terms of biological role, enone oxidoreductase involved in the biosynthesis of 4-hydroxy-2,5-dimethyl-3(2H)-furanone (HDMF or furaneol), the key flavor compound in strawberries. Can use both NADH and NADPH as the electron donor. This chain is 2-methylene-furan-3-one reductase (EO), found in Fragaria ananassa (Strawberry).